A 723-amino-acid polypeptide reads, in one-letter code: Multiple organellar RNA editing factor 4, mitochondrial (723 aa).

The transit peptide at 1-64 (MAMFSHRLRR…RLFSTTQYQY (64 aa)) directs the protein to the mitochondrion. Disordered stretches follow at residues 180 to 303 (ITPG…GQTQ), 318 to 474 (RQEM…EGQP), and 663 to 723 (QNGG…NSRI). The span at 191–204 (EGFDSLKKESKPEQ) shows a compositional bias: basic and acidic residues. 4 stretches are compositionally biased toward polar residues: residues 219–233 (TSGQ…TLPD), 273–303 (GQWQ…GQTQ), 327–365 (GQAQ…QGAQ), and 373–430 (QGAQ…NYSP). 2 stretches are compositionally biased toward low complexity: residues 459–474 (QGQG…EGQP) and 682–695 (QGFS…TFQQ). Residues 714–723 (TETRKPNSRI) are compositionally biased toward basic and acidic residues.

It belongs to the MORF family. Heterodimers with MORF8/RIP1, MORF1/RIP8 and MORF3/RIP3.

The protein localises to the mitochondrion. Functionally, involved in organellar RNA editing. Required for the processing of few RNA editing site in mitochondria. This chain is Multiple organellar RNA editing factor 4, mitochondrial, found in Arabidopsis thaliana (Mouse-ear cress).